Reading from the N-terminus, the 263-residue chain is UPF0739 protein C1orf74 homolog (263 aa).

The protein belongs to the UPF0739 family.

In Rattus norvegicus (Rat), this protein is UPF0739 protein C1orf74 homolog.